We begin with the raw amino-acid sequence, 287 residues long: Putative inactive carboxylesterase 4 (287 aa).

An N-terminal signal peptide occupies residues 1-18 (MWLPALVLATLAASAAWA). N-linked (GlcNAc...) asparagine glycosylation is present at N80.

The protein belongs to the type-B carboxylesterase/lipase family. In terms of tissue distribution, expressed in placenta.

The protein localises to the secreted. Its function is as follows. Has no esterase activity. This Homo sapiens (Human) protein is Putative inactive carboxylesterase 4 (CES1P1).